A 301-amino-acid polypeptide reads, in one-letter code: Ribonuclease Z (301 aa).

Positions 63, 65, 67, 68, 141, 204, and 262 each coordinate Zn(2+). Residue Asp67 is the Proton acceptor of the active site.

The protein belongs to the RNase Z family. As to quaternary structure, homodimer. Zn(2+) serves as cofactor.

It catalyses the reaction Endonucleolytic cleavage of RNA, removing extra 3' nucleotides from tRNA precursor, generating 3' termini of tRNAs. A 3'-hydroxy group is left at the tRNA terminus and a 5'-phosphoryl group is left at the trailer molecule.. Functionally, zinc phosphodiesterase, which displays some tRNA 3'-processing endonuclease activity. Probably involved in tRNA maturation, by removing a 3'-trailer from precursor tRNA. The polypeptide is Ribonuclease Z (Streptomyces avermitilis (strain ATCC 31267 / DSM 46492 / JCM 5070 / NBRC 14893 / NCIMB 12804 / NRRL 8165 / MA-4680)).